A 231-amino-acid chain; its full sequence is MAKISKRLQNLKATVDRNKLYAVDEAIALVKAAATAKFDESIDIAVNLGVDPRKSDQVVRGSVVLPRGTGKSVRVAVFAQGANAEAAKAAGAEVVGFDDLAEQVKAGNLDFDVVIASPDAMRVVGQLGQILGPRGLMPNPKVGTVTPNVAEAVKNAKAGQVQYRTDKAGIIHATIGRASFEAEALRENFSALVDALVKAKPAASKGVYLKKIAVSSTMGIGARVDTATVNA.

It belongs to the universal ribosomal protein uL1 family. In terms of assembly, part of the 50S ribosomal subunit.

Functionally, binds directly to 23S rRNA. The L1 stalk is quite mobile in the ribosome, and is involved in E site tRNA release. In terms of biological role, protein L1 is also a translational repressor protein, it controls the translation of the L11 operon by binding to its mRNA. In Chromobacterium violaceum (strain ATCC 12472 / DSM 30191 / JCM 1249 / CCUG 213 / NBRC 12614 / NCIMB 9131 / NCTC 9757 / MK), this protein is Large ribosomal subunit protein uL1.